A 623-amino-acid polypeptide reads, in one-letter code: C2H2-type transcription factor zfpA (623 aa).

Polar residues predominate over residues Gly202–Val219. Disordered stretches follow at residues Gly202 to Arg256 and Ser468 to Ala493. Positions Ser227 to Ser239 are enriched in low complexity. Residues Gly255–His276 form a C2H2-type zinc finger.

Its subcellular location is the nucleus. In terms of biological role, transcription factor involved in fungal growth and virulence potential. Negatively regulates antifungal drug susceptibility via transcriptional inhibition of the expressions of drug efflux pumps in a crzA-dependent way. Under the treatment of azoles, both zfpA and crzA transfer to nuclei and coregulate the expression of multidrug transporters and then keep normal drug susceptibility in fungal cells. The protein is C2H2-type transcription factor zfpA of Aspergillus fumigatus (strain CBS 144.89 / FGSC A1163 / CEA10) (Neosartorya fumigata).